Consider the following 198-residue polypeptide: MYDYIKGQLTKITAKYIVVEANGLGYMITVANPYSFTDCVNQQVTIYLHQVIREDAQLLFGFHSEEEKDVFLKLISVSGIGPTTALAIVAVDDNRGLVNAIDNSDITYLMRFPKIGKKTAQQMVLDLAGKFVEAPKEESSKLPKAKHQENEQLDEAIEALLALGYKATELKKIRAFFEGTSETAEQYIKSALKMLMKG.

The segment at 1-63 (MYDYIKGQLT…EDAQLLFGFH (63 aa)) is domain I. A domain II region spans residues 64-142 (SEEEKDVFLK…EAPKEESSKL (79 aa)). The interval 143-147 (PKAKH) is flexible linker. Residues 148–198 (QENEQLDEAIEALLALGYKATELKKIRAFFEGTSETAEQYIKSALKMLMKG) form a domain III region.

The protein belongs to the RuvA family. Homotetramer. Forms an RuvA(8)-RuvB(12)-Holliday junction (HJ) complex. HJ DNA is sandwiched between 2 RuvA tetramers; dsDNA enters through RuvA and exits via RuvB. An RuvB hexamer assembles on each DNA strand where it exits the tetramer. Each RuvB hexamer is contacted by two RuvA subunits (via domain III) on 2 adjacent RuvB subunits; this complex drives branch migration. In the full resolvosome a probable DNA-RuvA(4)-RuvB(12)-RuvC(2) complex forms which resolves the HJ.

It is found in the cytoplasm. Its function is as follows. The RuvA-RuvB-RuvC complex processes Holliday junction (HJ) DNA during genetic recombination and DNA repair, while the RuvA-RuvB complex plays an important role in the rescue of blocked DNA replication forks via replication fork reversal (RFR). RuvA specifically binds to HJ cruciform DNA, conferring on it an open structure. The RuvB hexamer acts as an ATP-dependent pump, pulling dsDNA into and through the RuvAB complex. HJ branch migration allows RuvC to scan DNA until it finds its consensus sequence, where it cleaves and resolves the cruciform DNA. In Streptococcus equi subsp. zooepidemicus (strain MGCS10565), this protein is Holliday junction branch migration complex subunit RuvA.